Reading from the N-terminus, the 729-residue chain is Cytoplasmic polyadenylation element-binding protein 4 (729 aa).

2 disordered regions span residues 20–49 (FPVRFHPHLQPPHHHQNATPSPAAFINNNT) and 78–133 (EKAK…KEKI). A compositionally biased stretch (basic residues) spans 24–35 (FHPHLQPPHHHQ). Low complexity predominate over residues 83–96 (QQQEQQDPLEKQQL). Phosphoserine is present on residues Ser97, Ser99, and Ser137. The segment at 218-328 (FGGSFSPQIG…RGLNGGITPL (111 aa)) is disordered. Residues 232-249 (HHPHHPHFQHHHSQHQQQ) are compositionally biased toward basic residues. A phosphoserine mark is found at Ser252 and Ser255. Residues 285 to 300 (WSSYQSPSPTPSSSWS) are compositionally biased toward low complexity. Residues 301–313 (PGGGGYGGWGGSQ) are compositionally biased toward gly residues. A Phosphothreonine modification is found at Thr326. Phosphoserine is present on residues Ser330 and Ser332. RRM domains are found at residues 472–563 (RKVF…PWNL) and 580–662 (KTIF…PYVL). An RNA-binding region spans residues 541-543 (KLY). Zn(2+) is bound by residues Cys667, Cys675, Cys684, Cys689, Cys694, Cys697, His702, and His710.

This sequence belongs to the RRM CPEB family. As to quaternary structure, interacts with TOB1. As to expression, expressed in pancreas in islets and ductal cells (at protein level). Expressed in melanocytes.

It is found in the cytoplasm. Its subcellular location is the cell projection. The protein localises to the dendrite. It localises to the dendritic spine. The protein resides in the postsynaptic density. It is found in the axon. Its subcellular location is the growth cone. The protein localises to the endoplasmic reticulum. It localises to the perinuclear region. Functionally, sequence-specific RNA-binding protein that binds to the cytoplasmic polyadenylation element (CPE), an uridine-rich sequence element (consensus sequence 5'-UUUUUAU-3') within the mRNA 3'-UTR. RNA binding results in a clear conformational change analogous to the Venus fly trap mechanism. Regulates activation of unfolded protein response (UPR) in the process of adaptation to ER stress in liver, by maintaining translation of CPE-regulated mRNAs in conditions in which global protein synthesis is inhibited. Required for cell cycle progression, specifically for cytokinesis and chromosomal segregation. Plays a role as an oncogene promoting tumor growth and progression by positively regulating translation of t-plasminogen activator/PLAT. Stimulates proliferation of melanocytes. In contrast to CPEB1 and CPEB3, does not play role in synaptic plasticity, learning and memory. This Homo sapiens (Human) protein is Cytoplasmic polyadenylation element-binding protein 4 (CPEB4).